The sequence spans 132 residues: Small ribosomal subunit protein bS6 (132 aa).

Residues 99–132 (ASPMVKAKDERRGDRREDFANETADDADAGDSEE) form a disordered region. Residues 104–117 (KAKDERRGDRREDF) are compositionally biased toward basic and acidic residues. Positions 121–132 (TADDADAGDSEE) are enriched in acidic residues.

Belongs to the bacterial ribosomal protein bS6 family.

Binds together with bS18 to 16S ribosomal RNA. This chain is Small ribosomal subunit protein bS6, found in Serratia proteamaculans (strain 568).